Consider the following 331-residue polypeptide: MTIATKTPTTPETLDIFQAKAYSPYYFFSTEEWAKFRADTPLTLTADEVTRLRSMGDPIDLDEVRRIYLSLSRLLSSHVESSQILFEQRNRFLSLNGVAKTPFVIGIAGSVAVGKSTTARILKELLRRWPSSPKVDLITTDGFLYPNAELQRRNLMQRKGFPESYDTAALLRFLSAIKAGQPDVKAPCYSHLVYDVLPSEYKTVDRPDILIFEGINVLQSRHLPADGKIVPMVSDFFDFSIYIDADEDLIHNWYVTRFMRLRETAFRDPHSFFHRYASITEEEALGIAEGLWKNINLKNLRQNILPTRPRADLILRKGKNHLIEQVALRKL.

109–116 lines the ATP pocket; that stretch reads GSVAVGKS.

It belongs to the prokaryotic pantothenate kinase family.

The protein resides in the cytoplasm. It carries out the reaction (R)-pantothenate + ATP = (R)-4'-phosphopantothenate + ADP + H(+). It participates in cofactor biosynthesis; coenzyme A biosynthesis; CoA from (R)-pantothenate: step 1/5. The polypeptide is Pantothenate kinase (Rhizobium rhizogenes (strain K84 / ATCC BAA-868) (Agrobacterium radiobacter)).